The chain runs to 66 residues: uncharacterized protein (66 aa).

This is an uncharacterized protein from Human cytomegalovirus (strain AD169) (HHV-5).